A 541-amino-acid polypeptide reads, in one-letter code: MPTFVDRVVLHAAAGDGGHGCCSIHREKFKPLGGPDGGNGGRGGNVLLRVDSGVTTLLDFHFHPHQRAGGGRPGQGSNRHGADGDDLVLSVPDGTVVLSPDGEQIVDLVGAGSTYVLAHGGRGGRGNASLASARRKAPGFAELGEPGEQLDAVLELKSVADVALVGFPSAGKSSLVSVLSAARPKIADYPFTTLVPNLGVVQAGDHRPFTVADVPGLIPGASQGRGLGLEFLRHIERCSLIVHVLDCATLEPGRDPLTDLDVIEAELAAYTTDLSDRPRLVVLNKVDVPDAAELAELVTPDLQARGLAVHQISTASRHGVRGLALALAELVASLRAAVPSPAATRIVLRPRAVDEPDFTVRAEGDGFVVGGTKPLRWVRQTDFSNEEAIGYLADRLARLGVEKELAKRGAFPGVAVTIGAVTFDWEPTLSGREALLAAGGGDGDGYGEAGYGAVDTAVTIATVGGSGGTRAGARGGAVVSDLPLGPRGTDLRLRTSKRLTRAQRTALSDSADDFDDGAGFSDSAAFGDSGGSGGDADGGRG.

Residues 2 to 159 (PTFVDRVVLH…LDAVLELKSV (158 aa)) form the Obg domain. Residues 63–84 (HPHQRAGGGRPGQGSNRHGADG) are disordered. The OBG-type G domain occupies 160–332 (ADVALVGFPS…LALALAELVA (173 aa)). GTP-binding positions include 166-173 (GFPSAGKS), 191-195 (FTTLV), 213-216 (DVPG), 284-287 (NKVD), and 313-315 (STA). Mg(2+)-binding residues include Ser173 and Thr193. The OCT domain maps to 350–427 (PRAVDEPDFT…IGAVTFDWEP (78 aa)). Positions 497–541 (KRLTRAQRTALSDSADDFDDGAGFSDSAAFGDSGGSGGDADGGRG) are disordered. A compositionally biased stretch (low complexity) spans 517–527 (GAGFSDSAAFG). Positions 528-541 (DSGGSGGDADGGRG) are enriched in gly residues.

It belongs to the TRAFAC class OBG-HflX-like GTPase superfamily. OBG GTPase family. As to quaternary structure, monomer. Mg(2+) serves as cofactor.

It localises to the cytoplasm. An essential GTPase which binds GTP, GDP and possibly (p)ppGpp with moderate affinity, with high nucleotide exchange rates and a fairly low GTP hydrolysis rate. Plays a role in control of the cell cycle, stress response, ribosome biogenesis and in those bacteria that undergo differentiation, in morphogenesis control. The polypeptide is GTPase Obg (Parafrankia sp. (strain EAN1pec)).